The following is a 1102-amino-acid chain: Centrosomal protein of 128 kDa (1102 aa).

A phosphoserine mark is found at Ser-31, Ser-248, and Ser-290. 2 coiled-coil regions span residues 215-822 (VSDR…LETE) and 878-959 (EELK…ALQM). The interval 326–346 (QHQVPCISKQPLSHQDDQGDD) is disordered. Disordered stretches follow at residues 991-1048 (SEKT…DHSR) and 1070-1102 (DPAS…KYKK). Over residues 1009–1027 (QQRRDDTKPRIKSFRDDRP) the composition is skewed to basic and acidic residues. 2 stretches are compositionally biased toward polar residues: residues 1039 to 1048 (HSSSCQDHSR) and 1076 to 1089 (GDTT…TSPQ). Residues 1090–1102 (SKKEEHEIKKYKK) are compositionally biased toward basic and acidic residues.

The protein localises to the cytoplasm. It localises to the cytoskeleton. It is found in the microtubule organizing center. Its subcellular location is the centrosome. The protein resides in the centriole. The protein localises to the spindle pole. The protein is Centrosomal protein of 128 kDa (Cep128) of Mus musculus (Mouse).